Reading from the N-terminus, the 564-residue chain is Serine/threonine-protein kinase DBF20 (564 aa).

Phosphoserine is present on S17. Residues 24–62 (LNIPKPTSPQAQYRPARKSENGRLTPGLPRSYKPCDSDD) form a disordered region. One can recognise a Protein kinase domain in the interval 169–469 (FQILTQVGQG…FEQVRKMSYF (301 aa)). ATP is bound by residues 175 to 183 (VGQGGYGQV) and K198. Catalysis depends on D292, which acts as the Proton acceptor. S366 carries the phosphoserine modification. One can recognise an AGC-kinase C-terminal domain in the interval 470 to 547 (AEINFETLRT…RHRDGKQGSS (78 aa)). The residue at position 536 (T536) is a Phosphothreonine.

It belongs to the protein kinase superfamily. Ser/Thr protein kinase family.

It carries out the reaction L-seryl-[protein] + ATP = O-phospho-L-seryl-[protein] + ADP + H(+). The catalysed reaction is L-threonyl-[protein] + ATP = O-phospho-L-threonyl-[protein] + ADP + H(+). Is probably a Ser/Thr-protein kinase that may function in initiation of DNA synthesis and also in late nuclear division. The chain is Serine/threonine-protein kinase DBF20 (DBF20) from Saccharomyces cerevisiae (strain ATCC 204508 / S288c) (Baker's yeast).